We begin with the raw amino-acid sequence, 500 residues long: L-arabinose isomerase (500 aa).

Mn(2+) is bound by residues Glu-306, Glu-333, His-350, and His-450.

It belongs to the arabinose isomerase family. As to quaternary structure, homohexamer. It depends on Mn(2+) as a cofactor.

It carries out the reaction beta-L-arabinopyranose = L-ribulose. Its pathway is carbohydrate degradation; L-arabinose degradation via L-ribulose; D-xylulose 5-phosphate from L-arabinose (bacterial route): step 1/3. In terms of biological role, catalyzes the conversion of L-arabinose to L-ribulose. This Klebsiella pneumoniae (strain 342) protein is L-arabinose isomerase.